The chain runs to 225 residues: Protein-L-isoaspartate O-methyltransferase (225 aa).

Ser-75 is an active-site residue.

It belongs to the methyltransferase superfamily. L-isoaspartyl/D-aspartyl protein methyltransferase family.

Its subcellular location is the cytoplasm. The catalysed reaction is [protein]-L-isoaspartate + S-adenosyl-L-methionine = [protein]-L-isoaspartate alpha-methyl ester + S-adenosyl-L-homocysteine. Functionally, catalyzes the methyl esterification of L-isoaspartyl residues in peptides and proteins that result from spontaneous decomposition of normal L-aspartyl and L-asparaginyl residues. It plays a role in the repair and/or degradation of damaged proteins. This is Protein-L-isoaspartate O-methyltransferase from Stenotrophomonas maltophilia (strain K279a).